We begin with the raw amino-acid sequence, 126 residues long: Fluoride-specific ion channel FluC (126 aa).

The next 4 helical transmembrane spans lie at 2–22, 37–57, 65–85, and 101–121; these read LTFA…GAWL, WGTL…VALI, AWIR…FSTF, and AAAY…LATV. Positions 77 and 80 each coordinate Na(+).

This sequence belongs to the fluoride channel Fluc/FEX (TC 1.A.43) family.

It localises to the cell inner membrane. The enzyme catalyses fluoride(in) = fluoride(out). Na(+) is not transported, but it plays an essential structural role and its presence is essential for fluoride channel function. Fluoride-specific ion channel. Important for reducing fluoride concentration in the cell, thus reducing its toxicity. The protein is Fluoride-specific ion channel FluC of Bordetella parapertussis (strain 12822 / ATCC BAA-587 / NCTC 13253).